Reading from the N-terminus, the 342-residue chain is Cyclin-D3-1 (342 aa).

A compositionally biased stretch (polar residues) spans 322 to 334; that stretch reads VGSPATNYESSAS. The segment at 322–342 is disordered; sequence VGSPATNYESSASSKRRRICR.

Belongs to the cyclin family. Cyclin D subfamily.

The sequence is that of Cyclin-D3-1 (CYCD3-1) from Oryza sativa subsp. japonica (Rice).